A 341-amino-acid chain; its full sequence is tRNA N6-adenosine threonylcarbamoyltransferase (341 aa).

Fe cation contacts are provided by histidine 111 and histidine 115. Substrate contacts are provided by residues 134–138 (LVSGG), aspartate 167, glycine 180, and asparagine 276. Fe cation is bound at residue aspartate 304.

It belongs to the KAE1 / TsaD family. Fe(2+) serves as cofactor.

Its subcellular location is the cytoplasm. The catalysed reaction is L-threonylcarbamoyladenylate + adenosine(37) in tRNA = N(6)-L-threonylcarbamoyladenosine(37) in tRNA + AMP + H(+). In terms of biological role, required for the formation of a threonylcarbamoyl group on adenosine at position 37 (t(6)A37) in tRNAs that read codons beginning with adenine. Is involved in the transfer of the threonylcarbamoyl moiety of threonylcarbamoyl-AMP (TC-AMP) to the N6 group of A37, together with TsaE and TsaB. TsaD likely plays a direct catalytic role in this reaction. The protein is tRNA N6-adenosine threonylcarbamoyltransferase of Pseudomonas syringae pv. tomato (strain ATCC BAA-871 / DC3000).